Consider the following 292-residue polypeptide: uncharacterized protein (292 aa).

This is an uncharacterized protein from Haemophilus influenzae (strain ATCC 51907 / DSM 11121 / KW20 / Rd).